Consider the following 732-residue polypeptide: Coagulation factor XIII A chain (732 aa).

The tract at residues 1-26 (MSDTPASTFGGRRAVPPNNSNAAEVD) is disordered. N-acetylserine is present on S2. Residues 2–38 (SDTPASTFGGRRAVPPNNSNAAEVDLPTEELQGLVPR) constitute a propeptide, activation peptide. Residues C315, H374, and D397 contribute to the active site. Residues N437, D439, E486, and E491 each contribute to the Ca(2+) site. A glycan (N-linked (GlcNAc...) asparagine) is linked at N614.

Belongs to the transglutaminase superfamily. Transglutaminase family. As to quaternary structure, tetramer of two A chains (F13A1) and two B (F13B) chains. Ca(2+) serves as cofactor. In terms of processing, the activation peptide is released by thrombin.

It is found in the cytoplasm. It localises to the secreted. It catalyses the reaction L-glutaminyl-[protein] + L-lysyl-[protein] = [protein]-L-lysyl-N(6)-5-L-glutamyl-[protein] + NH4(+). In terms of biological role, factor XIII is activated by thrombin and calcium ion to a transglutaminase that catalyzes the formation of gamma-glutamyl-epsilon-lysine cross-links between fibrin chains, thus stabilizing the fibrin clot. Also cross-link alpha-2-plasmin inhibitor, or fibronectin, to the alpha chains of fibrin. The chain is Coagulation factor XIII A chain (F13a1) from Mus musculus (Mouse).